The chain runs to 366 residues: Major outer membrane protein (366 aa).

Residues 1–21 form the signal peptide; it reads MKKTLLATAIAGAMAASGAQA.

This sequence belongs to the Gram-negative porin family. Homotrimer.

Its subcellular location is the cell outer membrane. The chain is Major outer membrane protein from Halomonas elongata (strain ATCC 33173 / DSM 2581 / NBRC 15536 / NCIMB 2198 / 1H9).